Reading from the N-terminus, the 87-residue chain is Small ribosomal subunit protein bS20 (87 aa).

It belongs to the bacterial ribosomal protein bS20 family.

In terms of biological role, binds directly to 16S ribosomal RNA. The polypeptide is Small ribosomal subunit protein bS20 (Halothermothrix orenii (strain H 168 / OCM 544 / DSM 9562)).